The sequence spans 434 residues: Adenylosuccinate synthetase (434 aa).

Residues 12 to 18 and 40 to 42 contribute to the GTP site; these read GDEGKGK and GHT. Asp-13 acts as the Proton acceptor in catalysis. Mg(2+) is bound by residues Asp-13 and Gly-40. IMP contacts are provided by residues 13-16, 38-41, Thr-129, Arg-143, Gln-224, Thr-239, and Arg-303; these read DEGK and NAGH. The active-site Proton donor is the His-41. 299–305 is a binding site for substrate; the sequence is AVTGRPR. GTP is bound by residues Arg-305, 331 to 333, and 413 to 415; these read KLD and STG.

Belongs to the adenylosuccinate synthetase family. As to quaternary structure, homodimer. Requires Mg(2+) as cofactor.

Its subcellular location is the cytoplasm. The enzyme catalyses IMP + L-aspartate + GTP = N(6)-(1,2-dicarboxyethyl)-AMP + GDP + phosphate + 2 H(+). Its pathway is purine metabolism; AMP biosynthesis via de novo pathway; AMP from IMP: step 1/2. In terms of biological role, plays an important role in the de novo pathway of purine nucleotide biosynthesis. Catalyzes the first committed step in the biosynthesis of AMP from IMP. This is Adenylosuccinate synthetase from Solibacter usitatus (strain Ellin6076).